The chain runs to 825 residues: Protein HIR1 (825 aa).

WD repeat units lie at residues 15 to 54 (QRNY…VFAK), 75 to 114 (RHTG…VQPL), 132 to 171 (AHDN…KIKR), 174 to 213 (VHQS…DLSF), and 227 to 270 (PLTT…TSVS). Positions 294-304 (HERGEEVDGAS) are enriched in basic and acidic residues. The segment at 294–320 (HERGEEVDGASKDNSAASESSGKRRLK) is disordered. WD repeat units lie at residues 309-351 (AASE…PIFV) and 355-396 (LTSK…KAIP). Residues 574 to 591 (DEESMDDDAEVADEEDET) show a composition bias toward acidic residues. The disordered stretch occupies residues 574-595 (DEESMDDDAEVADEEDETKNEH).

This sequence belongs to the WD repeat HIR1 family.

It is found in the nucleus. Required for replication-independent chromatin assembly and for the periodic repression of histone gene transcription during the cell cycle. In Eremothecium gossypii (strain ATCC 10895 / CBS 109.51 / FGSC 9923 / NRRL Y-1056) (Yeast), this protein is Protein HIR1 (HIR1).